Reading from the N-terminus, the 144-residue chain is Nucleoside diphosphate kinase (144 aa).

ATP-binding residues include Lys-11, Phe-59, Arg-87, Thr-93, Arg-104, and Asn-114. Catalysis depends on His-117, which acts as the Pros-phosphohistidine intermediate.

It belongs to the NDK family. As to quaternary structure, homotetramer. Mg(2+) is required as a cofactor.

Its subcellular location is the cytoplasm. It carries out the reaction a 2'-deoxyribonucleoside 5'-diphosphate + ATP = a 2'-deoxyribonucleoside 5'-triphosphate + ADP. The catalysed reaction is a ribonucleoside 5'-diphosphate + ATP = a ribonucleoside 5'-triphosphate + ADP. In terms of biological role, major role in the synthesis of nucleoside triphosphates other than ATP. The ATP gamma phosphate is transferred to the NDP beta phosphate via a ping-pong mechanism, using a phosphorylated active-site intermediate. The sequence is that of Nucleoside diphosphate kinase from Baumannia cicadellinicola subsp. Homalodisca coagulata.